Reading from the N-terminus, the 91-residue chain is MTLFSSISSISNPMTSSKSSIASFGSGTSMGSNSIACGGGCGGSDGILGLGLGLSLGLGLGLNLTGGSRSRGGCGGSNGSMGGGNGSCCGI.

Disordered regions lie at residues 1–20 (MTLFSSISSISNPMTSSKSS) and 72–91 (GGCGGSNGSMGGGNGSCCGI).

This sequence belongs to the hssA/B family.

The polypeptide is HssA/B-like protein 52 (hssl52) (Dictyostelium discoideum (Social amoeba)).